The primary structure comprises 206 residues: Large ribosomal subunit protein uL4 (206 aa).

The segment at 43–78 is disordered; the sequence is ARSGNRKQKDREEVHHTTKKPWRQKGTGRARAGMSS. Basic and acidic residues predominate over residues 49–58; it reads KQKDREEVHH. Residues 59–70 show a composition bias toward basic residues; sequence TTKKPWRQKGTG.

Belongs to the universal ribosomal protein uL4 family. As to quaternary structure, part of the 50S ribosomal subunit.

In terms of biological role, one of the primary rRNA binding proteins, this protein initially binds near the 5'-end of the 23S rRNA. It is important during the early stages of 50S assembly. It makes multiple contacts with different domains of the 23S rRNA in the assembled 50S subunit and ribosome. Its function is as follows. Forms part of the polypeptide exit tunnel. This is Large ribosomal subunit protein uL4 from Herminiimonas arsenicoxydans.